Consider the following 314-residue polypeptide: Cytochrome f (314 aa).

An N-terminal signal peptide occupies residues 1–29; that stretch reads MTRSISISVLIISVLIMIYVITRTSISNA. Heme-binding residues include tyrosine 30, cysteine 50, cysteine 53, and histidine 54. A helical membrane pass occupies residues 280–300; sequence VQGLLFFLASVILAQIFLVLK.

It belongs to the cytochrome f family. As to quaternary structure, the 4 large subunits of the cytochrome b6-f complex are cytochrome b6, subunit IV (17 kDa polypeptide, petD), cytochrome f and the Rieske protein, while the 4 small subunits are PetG, PetL, PetM and PetN. The complex functions as a dimer. Heme is required as a cofactor.

Its subcellular location is the plastid. The protein localises to the chloroplast thylakoid membrane. Functionally, component of the cytochrome b6-f complex, which mediates electron transfer between photosystem II (PSII) and photosystem I (PSI), cyclic electron flow around PSI, and state transitions. The sequence is that of Cytochrome f from Illicium oligandrum (Star anise).